Here is a 426-residue protein sequence, read N- to C-terminus: MAESEEEVDVLVQRVVKDITNAFKRNPNIDEIGLIPCPEARYNRSPIVLVENKLGVESWCVKFLLPYVHNKLLLYRQRKQWLDREALVDITSTLLLLNPDFTTAWNVRKELLQCGVLNPEKDLYLGKLALSKHPKSPETWIHRRWVLQRLQKECSPSGQELKDSAESRRQCERLQRALQEEMRVCAEAAGRYPSNYNAWSHRIWVLQNMAKGNLKVLHDELSSTRLWVSMHVSDHSGFHYRQHLLKALAKELSPAAEKDVHTSQQPNGENTATASDDNHHKDVMPRLFHEEIQLCTDLIESYPGHETLWCHRRHVFYLWHQWRREHMQGAGSQSPALTHTDVLLSKELCDNNSISQAMDIDCVLDGSKHGSYTQDTKRLKRGPLLLQPGFPSEHTFISRILTGCRNPEQSRFAIAYRKWLDSVIGQ.

PFTA repeat units lie at residues 86–119 (ALVD…VLNP), 121–154 (KDLY…QKEC), 180–213 (EEMR…AKGN), and 219–252 (DELS…AKEL). The tract at residues 255–279 (AAEKDVHTSQQPNGENTATASDDNH) is disordered. Residues 262–275 (TSQQPNGENTATAS) are compositionally biased toward polar residues. One copy of the PFTA 5 repeat lies at 290 to 323 (EEIQLCTDLIESYPGHETLWCHRRHVFYLWHQWR).

It belongs to the protein prenyltransferase subunit alpha family.

This is Protein prenyltransferase alpha subunit repeat-containing protein 1 (ptar1) from Danio rerio (Zebrafish).